The primary structure comprises 212 residues: Ribosomal RNA small subunit methyltransferase G (212 aa).

S-adenosyl-L-methionine-binding positions include glycine 72, leucine 77, 123 to 124 (VE), and arginine 138.

The protein belongs to the methyltransferase superfamily. RNA methyltransferase RsmG family.

It is found in the cytoplasm. It catalyses the reaction guanosine(527) in 16S rRNA + S-adenosyl-L-methionine = N(7)-methylguanosine(527) in 16S rRNA + S-adenosyl-L-homocysteine. In terms of biological role, specifically methylates the N7 position of guanine in position 527 of 16S rRNA. This Histophilus somni (strain 129Pt) (Haemophilus somnus) protein is Ribosomal RNA small subunit methyltransferase G.